Reading from the N-terminus, the 567-residue chain is Fanconi anemia group C protein homolog (567 aa).

As to quaternary structure, belongs to the multisubunit FA complex composed of FANCA, FANCB, FANCC, FANCE, FANCF, FANCG, FANCL/PHF9 and FANCM. This complex may also include HSP70. Interacts with ZBTB32. Upon IFNG induction, interacts with STAT1. Interacts with CDK1. Interacts with EIF2AK2.

It is found in the nucleus. The protein resides in the cytoplasm. Functionally, DNA repair protein that may operate in a postreplication repair or a cell cycle checkpoint function. May be implicated in interstrand DNA cross-link repair and in the maintenance of normal chromosome stability. Upon IFNG induction, may facilitate STAT1 activation by recruiting STAT1 to IFNGR1. The chain is Fanconi anemia group C protein homolog (FANCC) from Bos taurus (Bovine).